The chain runs to 488 residues: Ribulose bisphosphate carboxylase large chain (488 aa).

Positions 127 and 177 each coordinate substrate. Lys-179 functions as the Proton acceptor in the catalytic mechanism. Lys-181 provides a ligand contact to substrate. Mg(2+) is bound by residues Lys-205, Asp-207, and Glu-208. Lys-205 is modified (N6-carboxylysine). His-297 (proton acceptor) is an active-site residue. Residues Arg-298, His-330, and Ser-382 each coordinate substrate.

It belongs to the RuBisCO large chain family. Type I subfamily. In terms of assembly, heterohexadecamer of 8 large chains and 8 small chains. The cofactor is Mg(2+).

It localises to the plastid. The protein localises to the chloroplast. It carries out the reaction 2 (2R)-3-phosphoglycerate + 2 H(+) = D-ribulose 1,5-bisphosphate + CO2 + H2O. The enzyme catalyses D-ribulose 1,5-bisphosphate + O2 = 2-phosphoglycolate + (2R)-3-phosphoglycerate + 2 H(+). Functionally, ruBisCO catalyzes two reactions: the carboxylation of D-ribulose 1,5-bisphosphate, the primary event in carbon dioxide fixation, as well as the oxidative fragmentation of the pentose substrate in the photorespiration process. Both reactions occur simultaneously and in competition at the same active site. The chain is Ribulose bisphosphate carboxylase large chain (rbcL) from Pyropia dentata (Red alga).